The primary structure comprises 365 residues: Transcription factor aptf-1 (365 aa).

Disordered stretches follow at residues 13-40 and 93-126; these read EFVR…PFYE and TPPQ…SNYS. Positions 223–356 are H-S-H (helix-span-helix), dimerization; sequence RRKQANVTAW…MIDESIKYID (134 aa).

This sequence belongs to the AP-2 family. In terms of assembly, binds DNA as a dimer. In terms of tissue distribution, expressed in five interneurons AIB, RIB and RIS.

The protein resides in the nucleus. Functionally, transcription factor, which is required in the single sleep-active ring interneuron RIS for sleep-like behavioral quiescence induced by neuropeptide signaling in larvae. Regulates gene expression of sleep-inducing FMRFamide-like neuropeptide flp-11 in RIS. The protein is Transcription factor aptf-1 of Caenorhabditis elegans.